The chain runs to 590 residues: Mitochondrial distribution and morphology protein 34 (590 aa).

The SMP-LTD domain occupies 1–225 (MSFIFNRETF…LPSVIFNMSQ (225 aa)). The span at 393 to 405 (RRKIKMRSRKPSK) shows a compositional bias: basic residues. The interval 393-456 (RRKIKMRSRK…APEGGPNAED (64 aa)) is disordered. The span at 413–427 (PAQNDSGTSSCSNVA) shows a compositional bias: polar residues.

It belongs to the MDM34 family. In terms of assembly, component of the ER-mitochondria encounter structure (ERMES) or MDM complex, composed of MMM1, MDM10, MDM12 and MDM34.

It localises to the mitochondrion outer membrane. Component of the ERMES/MDM complex, which serves as a molecular tether to connect the endoplasmic reticulum (ER) and mitochondria. Components of this complex are involved in the control of mitochondrial shape and protein biogenesis, and function in nonvesicular lipid trafficking between the ER and mitochondria. MDM34 is required for the interaction of the ER-resident membrane protein MMM1 and the outer mitochondrial membrane-resident beta-barrel protein MDM10. The polypeptide is Mitochondrial distribution and morphology protein 34 (Eremothecium gossypii (strain ATCC 10895 / CBS 109.51 / FGSC 9923 / NRRL Y-1056) (Yeast)).